We begin with the raw amino-acid sequence, 245 residues long: MAVRASFENNNEIGCFAKLTNTYCLVAIGGSENFYSVFEGELSETIPVVHASIAGCRIIGRMCVGNRHGLMVPNNTTDQELQHMRNSLPDSVRIQRVEERLSALGNVIACNDYVALVHPDLDRETEEILADVLKVEVFRQTIAEQVLVGSYCAFSNQGGLLHPKTSIEDQDELSSLLQVPLVTGTVNRGSEVIAAGMVVNDWCAFCGLDTTSTELSVIESVFKLSDAHPSTIATSMRDSLIDSLT.

This sequence belongs to the eIF-6 family. In terms of assembly, monomer. Associates with the 60S ribosomal subunit.

Its subcellular location is the cytoplasm. The protein resides in the nucleus. The protein localises to the nucleolus. In terms of biological role, binds to the 60S ribosomal subunit and prevents its association with the 40S ribosomal subunit to form the 80S initiation complex in the cytoplasm. May also be involved in ribosome biogenesis. In Xenopus laevis (African clawed frog), this protein is Eukaryotic translation initiation factor 6 (eif6).